Consider the following 256-residue polypeptide: Distal membrane-arm assembly complex protein 2 (256 aa).

Phosphoserine is present on S252.

This sequence belongs to the ATP synthase subunit s family. In terms of assembly, interacts with incompletely assembled mitochondrial NADH:ubiquinone oxidoreductase complex (complex I).

The protein localises to the mitochondrion. Functionally, required for the assembly of the mitochondrial NADH:ubiquinone oxidoreductase complex (complex I). Involved in the assembly of the distal region of complex I. This Macaca fascicularis (Crab-eating macaque) protein is Distal membrane-arm assembly complex protein 2.